We begin with the raw amino-acid sequence, 161 residues long: 3-isopropylmalate dehydratase small subunit (161 aa).

It belongs to the LeuD family. LeuD type 2 subfamily. In terms of assembly, heterodimer of LeuC and LeuD.

The enzyme catalyses (2R,3S)-3-isopropylmalate = (2S)-2-isopropylmalate. Its pathway is amino-acid biosynthesis; L-leucine biosynthesis; L-leucine from 3-methyl-2-oxobutanoate: step 2/4. In terms of biological role, catalyzes the isomerization between 2-isopropylmalate and 3-isopropylmalate, via the formation of 2-isopropylmaleate. The protein is 3-isopropylmalate dehydratase small subunit of Metallosphaera sedula (strain ATCC 51363 / DSM 5348 / JCM 9185 / NBRC 15509 / TH2).